The primary structure comprises 284 residues: L-ribulose-5-phosphate 3-epimerase UlaE (284 aa).

The protein belongs to the L-ribulose-5-phosphate 3-epimerase family.

It carries out the reaction L-ribulose 5-phosphate = L-xylulose 5-phosphate. It participates in cofactor degradation; L-ascorbate degradation; D-xylulose 5-phosphate from L-ascorbate: step 3/4. Functionally, catalyzes the isomerization of L-xylulose-5-phosphate to L-ribulose-5-phosphate. Is involved in the anaerobic L-ascorbate utilization. The polypeptide is L-ribulose-5-phosphate 3-epimerase UlaE (Escherichia coli (strain K12 / MC4100 / BW2952)).